A 462-amino-acid chain; its full sequence is N-myc proto-oncogene protein (462 aa).

An interaction with AURKA region spans residues 19 to 47 (LEFDSLQPCFYPDEDDFYFGGPDSTPPGE). The interval 61 to 90 (LSPSRAFPEHSPEPSNWATEMLLPEADLWG) is interaction with AURKA and FBXW7. Residues 76–85 (NWATEMLLPE) carry the 9aaTAD motif. Disordered regions lie at residues 134 to 177 (KLQH…ATLP), 232 to 289 (AAPA…SSNN), and 332 to 390 (APSP…LERQ). 2 stretches are compositionally biased toward low complexity: residues 143 to 176 (GVSS…GATL) and 232 to 244 (AAPA…PASS). Acidic residues predominate over residues 257–276 (TLSDSDDEDDEEEDEEEEID). Residues S259 and S261 each carry the phosphoserine; by CK2 modification. The region spanning 379–431 (ERRRNHNILERQRRNDLRSSFLTLRDHVPELVKNEKAAKVVILKKATEYVHAL) is the bHLH domain. Residues 431–452 (LQANEHQLLLEKEKLQARQQQL) are leucine-zipper.

As to quaternary structure, efficient DNA binding requires dimerization with another bHLH protein. Binds DNA as a heterodimer with MAX. Interacts with KDM5A, KDM5B and HUWE1. Interacts with MYCNOS. Interacts with AURKA; interaction is phospho-independent and triggers AURKA activation; AURKA competes with FBXW7 for binding to unphosphorylated MYCN but not for binding to unphosphorylated MYCN. Interacts with FBXW7; FBXW7 competes with AURKA for binding to unphosphorylated MYCN but not for binding to phosphorylated MYCN. In terms of processing, phosphorylated by GSK3-beta which may promote its degradation. Phosphorylated by AURKA.

The protein resides in the nucleus. Functionally, positively regulates the transcription of MYCNOS in neuroblastoma cells. In Mus musculus (Mouse), this protein is N-myc proto-oncogene protein (Mycn).